A 293-amino-acid chain; its full sequence is Triosephosphate isomerase (293 aa).

Substrate is bound at residue 25–27; that stretch reads NWK. His117 serves as the catalytic Electrophile. Glu218 acts as the Proton acceptor in catalysis.

Belongs to the triosephosphate isomerase family. In terms of assembly, homodimer.

The protein localises to the cytoplasm. It carries out the reaction D-glyceraldehyde 3-phosphate = dihydroxyacetone phosphate. The protein operates within carbohydrate biosynthesis; gluconeogenesis. It participates in carbohydrate degradation; glycolysis; D-glyceraldehyde 3-phosphate from glycerone phosphate: step 1/1. Functionally, involved in the gluconeogenesis. Catalyzes stereospecifically the conversion of dihydroxyacetone phosphate (DHAP) to D-glyceraldehyde-3-phosphate (G3P). This chain is Triosephosphate isomerase, found in Tropheryma whipplei (strain Twist) (Whipple's bacillus).